Reading from the N-terminus, the 476-residue chain is Aspartyl/glutamyl-tRNA(Asn/Gln) amidotransferase subunit B (476 aa).

This sequence belongs to the GatB/GatE family. GatB subfamily. As to quaternary structure, heterotrimer of A, B and C subunits.

It carries out the reaction L-glutamyl-tRNA(Gln) + L-glutamine + ATP + H2O = L-glutaminyl-tRNA(Gln) + L-glutamate + ADP + phosphate + H(+). The enzyme catalyses L-aspartyl-tRNA(Asn) + L-glutamine + ATP + H2O = L-asparaginyl-tRNA(Asn) + L-glutamate + ADP + phosphate + 2 H(+). Functionally, allows the formation of correctly charged Asn-tRNA(Asn) or Gln-tRNA(Gln) through the transamidation of misacylated Asp-tRNA(Asn) or Glu-tRNA(Gln) in organisms which lack either or both of asparaginyl-tRNA or glutaminyl-tRNA synthetases. The reaction takes place in the presence of glutamine and ATP through an activated phospho-Asp-tRNA(Asn) or phospho-Glu-tRNA(Gln). The protein is Aspartyl/glutamyl-tRNA(Asn/Gln) amidotransferase subunit B of Clostridium botulinum (strain 657 / Type Ba4).